Here is a 746-residue protein sequence, read N- to C-terminus: Taurocyamine kinase (746 aa).

Approximate repeat units follow at residues 31–393 and 394–705; these read MQVE…PEGV and MPVE…YGEH. The 82-residue stretch at 35–116 folds into the Phosphagen kinase N-terminal 1 domain; the sequence is SLQNLQAKIR…FDAVIADYHK (82 aa). Residues 146–382 enclose the Phosphagen kinase C-terminal 1 domain; sequence LVVSTRVRLG…RALLELEVML (237 aa). ATP-binding positions include 149–153, His-212, and Arg-256; that span reads STRVR. Cys-298 is an active-site residue. Residues 307–311 and 335–340 contribute to the ATP site; these read RASVH and RGTHGE. The Phosphagen kinase N-terminal 2 domain occupies 398–479; the sequence is PLTYLAKLLE…LDPLICDYHG (82 aa). Residues 509 to 746 enclose the Phosphagen kinase C-terminal 2 domain; the sequence is FIVSTRVRVG…AKMIEIEKGL (238 aa). Residues 512-516, His-575, and Arg-619 contribute to the ATP site; that span reads STRVR. Residue Cys-661 is part of the active site. Residues 670–674 and 699–704 each bind ATP; these read RASVL and RGLYGE.

It belongs to the ATP:guanido phosphotransferase family. The cofactor is Mg(2+).

The enzyme catalyses taurocyamine + ATP = N-phosphotaurocyamine + ADP + H(+). Its function is as follows. This family of enzymes reversibly catalyzes the transfer of phosphate between ATP and various phosphogens (e.g. creatine phosphate). This Schistosoma mansoni (Blood fluke) protein is Taurocyamine kinase.